Here is a 382-residue protein sequence, read N- to C-terminus: Histidinol-phosphate aminotransferase (382 aa).

Lys215 is subject to N6-(pyridoxal phosphate)lysine. The segment at 363–382 (NIDNQNKTYSQTSSIRKGTI) is disordered.

It belongs to the class-II pyridoxal-phosphate-dependent aminotransferase family. Histidinol-phosphate aminotransferase subfamily. As to quaternary structure, homodimer. It depends on pyridoxal 5'-phosphate as a cofactor.

The catalysed reaction is L-histidinol phosphate + 2-oxoglutarate = 3-(imidazol-4-yl)-2-oxopropyl phosphate + L-glutamate. It functions in the pathway amino-acid biosynthesis; L-histidine biosynthesis; L-histidine from 5-phospho-alpha-D-ribose 1-diphosphate: step 7/9. The sequence is that of Histidinol-phosphate aminotransferase from Yersinia pestis bv. Antiqua (strain Antiqua).